We begin with the raw amino-acid sequence, 262 residues long: Glutamate racemase (262 aa).

Residues 5–6 (DS) and 37–38 (YG) each bind substrate. Cys69 acts as the Proton donor/acceptor in catalysis. Residue 70–71 (NT) participates in substrate binding. Catalysis depends on Cys181, which acts as the Proton donor/acceptor. 182 to 183 (TH) lines the substrate pocket.

The protein belongs to the aspartate/glutamate racemases family.

It carries out the reaction L-glutamate = D-glutamate. The protein operates within cell wall biogenesis; peptidoglycan biosynthesis. Its function is as follows. Provides the (R)-glutamate required for cell wall biosynthesis. This Buchnera aphidicola subsp. Acyrthosiphon pisum (strain APS) (Acyrthosiphon pisum symbiotic bacterium) protein is Glutamate racemase.